Here is a 561-residue protein sequence, read N- to C-terminus: Lipase maturation factor 1 (561 aa).

The segment at 1 to 32 (MAAPRESLRRRKAGAGDPEPEAPPGQGRDLKG) is disordered. At 1 to 42 (MAAPRESLRRRKAGAGDPEPEAPPGQGRDLKGRPARLRAGTF) the chain is on the cytoplasmic side. Residues 43-65 (WLTRIVLLRALAFVYFVAFLVAF) traverse the membrane as a helical segment. Over 66–120 (HQNKQLIGDRGLLPCRAYLQSVQRHFGGRVSWDALSYAPTILWLLDWSHMDANLD) the chain is Lumenal. A helical transmembrane segment spans residues 121-144 (ALALLGLGISSFILVSGCANMVLM). The Cytoplasmic segment spans residues 145–200 (AALWVLYMSLVNVGQIWYSFGWESQLLETGFLGIFLCPLWTLSALPRGTPTSWVVM). A helical membrane pass occupies residues 201–214 (WGFRWLIFRIMLGA). Residues 215-285 (GLIKIRGDRC…LGRRMCIVHG (71 aa)) lie on the Lumenal side of the membrane. A helical membrane pass occupies residues 286–314 (ALQVLFQVVLIISGNLSFLNWLTIVPSLA). Residues 315-360 (CFDDATLGGLFPSGPGRLKDQVLKIQEEETRGARAPRTRGSVARGT) lie on the Cytoplasmic side of the membrane. A helical membrane pass occupies residues 361-382 (VNLALGILVAWLSIPVVLNLLS). Residues 383–561 (PRQVMNSSFN…SRQWPYPEPE (179 aa)) are Lumenal-facing.

The protein belongs to the lipase maturation factor family. In terms of assembly, interacts with LPL and SEL1L.

Its subcellular location is the endoplasmic reticulum membrane. Involved in the maturation of specific proteins in the endoplasmic reticulum. Required for maturation and transport of active lipoprotein lipase (LPL) through the secretory pathway. Each LMF1 molecule chaperones 50 or more molecules of LPL. This chain is Lipase maturation factor 1 (LMF1), found in Bos taurus (Bovine).